Reading from the N-terminus, the 446-residue chain is Ribosomal protein uS12 methylthiotransferase RimO (446 aa).

Positions 9-121 constitute an MTTase N-terminal domain; it reads PKVGFVSLGC…VLDAIHAALP (113 aa). C18, C54, C83, C152, C156, and C159 together coordinate [4Fe-4S] cluster. One can recognise a Radical SAM core domain in the interval 138–375; the sequence is LTPPHYAYLK…MAVQEAISRQ (238 aa). The TRAM domain maps to 378 to 445; sequence QRRVGQRQRV…AHDLYGMVVS (68 aa).

This sequence belongs to the methylthiotransferase family. RimO subfamily. The cofactor is [4Fe-4S] cluster.

It localises to the cytoplasm. The enzyme catalyses L-aspartate(89)-[ribosomal protein uS12]-hydrogen + (sulfur carrier)-SH + AH2 + 2 S-adenosyl-L-methionine = 3-methylsulfanyl-L-aspartate(89)-[ribosomal protein uS12]-hydrogen + (sulfur carrier)-H + 5'-deoxyadenosine + L-methionine + A + S-adenosyl-L-homocysteine + 2 H(+). Catalyzes the methylthiolation of an aspartic acid residue of ribosomal protein uS12. In Acidithiobacillus ferrooxidans (strain ATCC 23270 / DSM 14882 / CIP 104768 / NCIMB 8455) (Ferrobacillus ferrooxidans (strain ATCC 23270)), this protein is Ribosomal protein uS12 methylthiotransferase RimO.